Consider the following 409-residue polypeptide: Evolutionarily conserved signaling intermediate in Toll pathway, mitochondrial (409 aa).

The N-terminal 26 residues, 1 to 26 (MLRRAQCLLRLHGNGGHSLVSRFRNY), are a transit peptide targeting the mitochondrion. Disordered stretches follow at residues 27–53 (ATDE…NLPA) and 383–409 (EEIE…SRQK). Basic and acidic residues predominate over residues 400–409 (QDEHISSRQK).

Belongs to the ECSIT family. In terms of assembly, interacts with Traf6. Associates with mitochondrial complex I assembly intermediates during its biogenesis.

It is found in the cytoplasm. The protein resides in the nucleus. It localises to the mitochondrion. Functionally, as part of the MCIA complex, involved in the assembly of the mitochondrial complex I. Involved in the innate immune response; promotes the production of antibacterial peptides. This Drosophila melanogaster (Fruit fly) protein is Evolutionarily conserved signaling intermediate in Toll pathway, mitochondrial.